The sequence spans 301 residues: Homoserine O-acetyltransferase (301 aa).

The active-site Acyl-thioester intermediate is Cys142. Positions 163 and 192 each coordinate substrate. His235 serves as the catalytic Proton acceptor. Glu237 is an active-site residue. Position 249 (Arg249) interacts with substrate.

The protein belongs to the MetA family.

The protein resides in the cytoplasm. The catalysed reaction is L-homoserine + acetyl-CoA = O-acetyl-L-homoserine + CoA. It participates in amino-acid biosynthesis; L-methionine biosynthesis via de novo pathway; O-acetyl-L-homoserine from L-homoserine: step 1/1. Transfers an acetyl group from acetyl-CoA to L-homoserine, forming acetyl-L-homoserine. This is Homoserine O-acetyltransferase from Bacillus cereus (strain AH187).